Consider the following 321-residue polypeptide: uncharacterized protein (321 aa).

10 helical membrane-spanning segments follow: residues Leu-6–Val-26, Phe-37–Val-57, Trp-72–Gln-92, Ile-100–Gly-120, Ile-134–Phe-154, Leu-160–Gly-180, Cys-196–Val-216, Val-223–Leu-243, Ser-255–Ile-275, and Gly-277–Leu-297. EamA domains are found at residues Met-18 to Thr-146 and Val-175 to Ile-300.

The protein belongs to the EamA transporter family.

It is found in the cell membrane. This is an uncharacterized protein from Bacillus subtilis (strain 168).